Reading from the N-terminus, the 507-residue chain is 2,3-bisphosphoglycerate-independent phosphoglycerate mutase (507 aa).

Mn(2+) is bound by residues aspartate 13 and serine 63. Serine 63 functions as the Phosphoserine intermediate in the catalytic mechanism. Substrate is bound by residues histidine 122, arginine 152–aspartate 153, arginine 184, arginine 190, arginine 256–arginine 259, and lysine 330. Residues aspartate 397, histidine 401, aspartate 438, histidine 439, and histidine 457 each contribute to the Mn(2+) site.

The protein belongs to the BPG-independent phosphoglycerate mutase family. Monomer. Mn(2+) is required as a cofactor.

It carries out the reaction (2R)-2-phosphoglycerate = (2R)-3-phosphoglycerate. The protein operates within carbohydrate degradation; glycolysis; pyruvate from D-glyceraldehyde 3-phosphate: step 3/5. In terms of biological role, catalyzes the interconversion of 2-phosphoglycerate and 3-phosphoglycerate. This is 2,3-bisphosphoglycerate-independent phosphoglycerate mutase from Chromobacterium violaceum (strain ATCC 12472 / DSM 30191 / JCM 1249 / CCUG 213 / NBRC 12614 / NCIMB 9131 / NCTC 9757 / MK).